Consider the following 733-residue polypeptide: 1,4-alpha-glucan branching enzyme GlgB (733 aa).

Aspartate 413 acts as the Nucleophile in catalysis. Glutamate 466 serves as the catalytic Proton donor.

Belongs to the glycosyl hydrolase 13 family. GlgB subfamily. As to quaternary structure, monomer.

The catalysed reaction is Transfers a segment of a (1-&gt;4)-alpha-D-glucan chain to a primary hydroxy group in a similar glucan chain.. The protein operates within glycan biosynthesis; glycogen biosynthesis. Its function is as follows. Catalyzes the formation of the alpha-1,6-glucosidic linkages in glycogen by scission of a 1,4-alpha-linked oligosaccharide from growing alpha-1,4-glucan chains and the subsequent attachment of the oligosaccharide to the alpha-1,6 position. This Leifsonia xyli subsp. xyli (strain CTCB07) protein is 1,4-alpha-glucan branching enzyme GlgB.